The chain runs to 972 residues: 116 kDa U5 small nuclear ribonucleoprotein component (972 aa).

Met1 bears the N-acetylmethionine mark. Residues 1–53 are disordered; that stretch reads MDTDLYDEFGNYIGPELDSDEDDDELGRETKDLDEVDEDEDDDDVGDHDEDHP. Acidic residues-rich tracts occupy residues 17-26 and 34-48; these read LDSDEDDDEL and DEVD…VGDH. A Phosphoserine modification is found at Ser19. Lys64 is covalently cross-linked (Glycyl lysine isopeptide (Lys-Gly) (interchain with G-Cter in SUMO1); alternate). Lys64 is covalently cross-linked (Glycyl lysine isopeptide (Lys-Gly) (interchain with G-Cter in SUMO2); alternate). Phosphothreonine is present on Thr86. The region spanning 127-409 is the tr-type G domain; the sequence is ELIRNVTLCG…GIHLTKEELK (283 aa). GTP-binding positions include 136–143, 204–208, and 258–261; these read GHLHHGKT, DTPGH, and NKID.

The protein belongs to the TRAFAC class translation factor GTPase superfamily. Classic translation factor GTPase family. EF-G/EF-2 subfamily. In terms of assembly, component of the U5 snRNP and the U4/U6-U5 tri-snRNP complex, a building block of the spliceosome. The U4/U6-U5 tri-snRNP complex is composed of the U4, U6 and U5 snRNAs and at least PRPF3, PRPF4, PRPF6, PRPF8, PRPF31, SNRNP200, TXNL4A, SNRNP40, DDX23, CD2BP2, PPIH, SNU13, EFTUD2, SART1 and USP39. Component of the pre-catalytic, catalytic and post-catalytic spliceosome complexes. Component of the minor spliceosome, which splices U12-type introns. Within this complex, interacts with CRIPT. Interacts with ERBB4 and PRPF8. Interacts with PIH1D1. Interacts with RPAP3 and URI1 in a ZNHIT2-dependent manner. Interacts with NRDE2. Interacts with FAM50A. Interacts with UBL5.

It localises to the nucleus. In terms of biological role, required for pre-mRNA splicing as component of the spliceosome, including pre-catalytic, catalytic and post-catalytic spliceosomal complexes. Component of the U5 snRNP and the U4/U6-U5 tri-snRNP complex, a building block of the spliceosome. As a component of the minor spliceosome, involved in the splicing of U12-type introns in pre-mRNAs. This Bos taurus (Bovine) protein is 116 kDa U5 small nuclear ribonucleoprotein component (EFTUD2).